The sequence spans 213 residues: Ribonuclease T (213 aa).

Residues 28-202 (VVVDVETGGF…YDTEQTARLF (175 aa)) form the Exonuclease domain. Positions 31, 33, 189, and 194 each coordinate Mg(2+). Histidine 189 functions as the Proton donor/acceptor in the catalytic mechanism.

Belongs to the RNase T family. As to quaternary structure, homodimer. Mg(2+) serves as cofactor.

In terms of biological role, trims short 3' overhangs of a variety of RNA species, leaving a one or two nucleotide 3' overhang. Responsible for the end-turnover of tRNA: specifically removes the terminal AMP residue from uncharged tRNA (tRNA-C-C-A). Also appears to be involved in tRNA biosynthesis. This is Ribonuclease T from Xanthomonas euvesicatoria pv. vesicatoria (strain 85-10) (Xanthomonas campestris pv. vesicatoria).